Here is a 519-residue protein sequence, read N- to C-terminus: Membrane-bound transcription factor site-2 protease (519 aa).

The Cytoplasmic portion of the chain corresponds to 1–3 (MIP). Residues 4-24 (VSLVVVVVGGWTVVYLTDLVL) form a helical membrane-spanning segment. At 25 to 74 (KSSVYFKHSYEDWLENNGLSISPFHIRWQTAVFNRAFYSWGRRKARMLYQ) the chain is on the lumenal side. A run of 2 helical transmembrane segments spans residues 75–95 (WFNF…FLLG) and 96–107 (KTLMQTLAQMMA). Over 108–144 (DSPSSYSSSSSSSSSSSSSSSSSSSSSSSLHNEQVLQ) the chain is Lumenal. Residues 115–135 (SSSSSSSSSSSSSSSSSSSSS) are disordered. Residues 145-169 (VVVPGINLPVNQLTYFFTAVLISGV) traverse the membrane as a helical segment. H171 lines the Zn(2+) pocket. Residue E172 is part of the active site. Transmembrane regions (helical) follow at residues 174-186 (GHGI…QVRF), 187-209 (NGFG…TTHL), and 229-251 (FVLA…PFYY). H175 contributes to the Zn(2+) binding site. The Lumenal segment spans residues 252-446 (TGVGVLITEV…LPVVVETFVK (195 aa)). N-linked (GlcNAc...) asparagine glycosylation occurs at N337. 2 consecutive transmembrane segments (helical) span residues 447 to 464 (YLIS…VPCF) and 465 to 476 (ALDGQWILNSFL). Residues 477–492 (DATLTSVIGDNDVKDL) are Lumenal-facing. A helical transmembrane segment spans residues 493 to 513 (IGFFILLGGSVLLAANVTLGL). The Cytoplasmic segment spans residues 514-519 (WMVTAR).

This sequence belongs to the peptidase M50A family. Zn(2+) serves as cofactor. In terms of tissue distribution, expressed in heart, brain, placenta, lung, liver, muscle, kidney and pancreas.

The protein resides in the membrane. It localises to the cytoplasm. Its subcellular location is the golgi apparatus membrane. The enzyme catalyses Cleaves several transcription factors that are type-2 transmembrane proteins within membrane-spanning domains. Known substrates include sterol regulatory element-binding protein (SREBP) -1, SREBP-2 and forms of the transcriptional activator ATF6. SREBP-2 is cleaved at the site 477-DRSRILL-|-CVLTFLCLSFNPLTSLLQWGGA-505. The residues Asn-Pro, 11 residues distal to the site of cleavage in the membrane-spanning domain, are important for cleavage by S2P endopeptidase. Replacement of either of these residues does not prevent cleavage, but there is no cleavage if both of these residues are replaced.. In terms of biological role, zinc metalloprotease that mediates intramembrane proteolysis of proteins such as ATF6, ATF6B, SREBF1/SREBP1 and SREBF2/SREBP2. Catalyzes the second step in the proteolytic activation of the sterol regulatory element-binding proteins (SREBPs) SREBF1/SREBP1 and SREBF2/SREBP2: cleaves SREBPs within the first transmembrane segment, thereby releasing the N-terminal segment with a portion of the transmembrane segment attached. Mature N-terminal SREBP fragments shuttle to the nucleus and activate gene transcription. Also mediates the second step in the proteolytic activation of the cyclic AMP-dependent transcription factor ATF-6 (ATF6 and ATF6B). Involved in intramembrane proteolysis during bone formation. In astrocytes and osteoblasts, upon DNA damage and ER stress, mediates the second step of the regulated intramembrane proteolytic activation of the transcription factor CREB3L1, leading to the inhibition of cell-cycle progression. The protein is Membrane-bound transcription factor site-2 protease of Homo sapiens (Human).